The following is a 150-amino-acid chain: Transcriptional repressor NrdR (150 aa).

A zinc finger lies at 3-34; that stretch reads CPFCGYEDTFVIDTREIEDQRVIRRRRECPNC. The 91-residue stretch at 49–139 folds into the ATP-cone domain; that stretch reads IMVIKKDGRR…VYQEFSSLEE (91 aa).

It belongs to the NrdR family. Requires Zn(2+) as cofactor.

Functionally, negatively regulates transcription of bacterial ribonucleotide reductase nrd genes and operons by binding to NrdR-boxes. In Dictyoglomus thermophilum (strain ATCC 35947 / DSM 3960 / H-6-12), this protein is Transcriptional repressor NrdR.